Reading from the N-terminus, the 426-residue chain is MARGAHQAPGGFWTVAAAPTRCSLPHSLPIPLHAAAAAAAWMAGVSAASAAGKIGSFLSKRPYAPPSWASHLSPAPSQTFSLGHFPTPIHKWNLPNLPNGTEVWIKRDDISGMQLSGNKVRKLEFLMADAVAQGADCVITVGGIQSNHCRATAVAAKYINLDCYLILRTSKLLVDKDPGLVGNLLVERLVGAHIDLVSKEEYGKIGSVALADLLKKKLLEEGRKPYVIPVGGSNSLGTWGYIEAIREIEHQIQISGDVQFDDIVVACGSGGTIAGLALGSKLSSLKAKVHAFSVCDDPGYFHSYVQDLIDGLHSDLRSHDLVNIENAKGLGYAMNTAEELKFVKDIATATGIVLDPVYSGKAAYGMLKDMGANPAKWEGRKILFVHTGGLLGLYDKVDELSSLSGSWRRMDLEESVPRKDGTGKMF.

Residues 1–63 (MARGAHQAPG…IGSFLSKRPY (63 aa)) constitute a mitochondrion transit peptide. K119 carries the N6-(pyridoxal phosphate)lysine modification. S146 (nucleophile) is an active-site residue.

It belongs to the ACC deaminase/D-cysteine desulfhydrase family. In terms of assembly, homodimer. Pyridoxal 5'-phosphate is required as a cofactor. As to expression, present in seeds (at protein level).

Its subcellular location is the mitochondrion. The catalysed reaction is D-cysteine + H2O = hydrogen sulfide + pyruvate + NH4(+) + H(+). Its activity is regulated as follows. Inhibited by L-cysteine (L-cys). Functionally, catalyzes the production of hydrogen sulfide (H2S) from D-cysteine (D-cys). This chain is D-cysteine desulfhydrase 1, mitochondrial, found in Oryza sativa subsp. japonica (Rice).